Here is a 188-residue protein sequence, read N- to C-terminus: MTNIAIFASGSGSNFENIVKHIQTGQLSGINVTALYTDNEGVPCIDRAKNLNIPIHINKPKDFSSKSLYEQHLLKLLSSEEVQWIVLAGYMRLVGQDLLQAYEGRILNIHPSLLPKFKGLDAIGQALESGDTVTGSTVHYVDSGMDTGEIIEQQQCDIKPDDTKEQLEDRVKHLEYELYPRVIAKIIK.

Gly-12–Asn-14 is a binding site for N(1)-(5-phospho-beta-D-ribosyl)glycinamide. Residues Lys-66, Met-91–Val-94, and Asn-108 contribute to the (6R)-10-formyltetrahydrofolate site. The active-site Proton donor is His-110.

The protein belongs to the GART family.

The catalysed reaction is N(1)-(5-phospho-beta-D-ribosyl)glycinamide + (6R)-10-formyltetrahydrofolate = N(2)-formyl-N(1)-(5-phospho-beta-D-ribosyl)glycinamide + (6S)-5,6,7,8-tetrahydrofolate + H(+). The protein operates within purine metabolism; IMP biosynthesis via de novo pathway; N(2)-formyl-N(1)-(5-phospho-D-ribosyl)glycinamide from N(1)-(5-phospho-D-ribosyl)glycinamide (10-formyl THF route): step 1/1. Functionally, catalyzes the transfer of a formyl group from 10-formyltetrahydrofolate to 5-phospho-ribosyl-glycinamide (GAR), producing 5-phospho-ribosyl-N-formylglycinamide (FGAR) and tetrahydrofolate. This is Phosphoribosylglycinamide formyltransferase from Staphylococcus epidermidis (strain ATCC 35984 / DSM 28319 / BCRC 17069 / CCUG 31568 / BM 3577 / RP62A).